We begin with the raw amino-acid sequence, 275 residues long: Rhamnulose-1-phosphate aldolase (275 aa).

Residue Glu-117 is part of the active site. Zn(2+) is bound by residues His-141, His-143, and His-212.

Belongs to the aldolase class II family. RhaD subfamily. In terms of assembly, homotetramer. Requires Zn(2+) as cofactor.

The protein resides in the cytoplasm. It carries out the reaction L-rhamnulose 1-phosphate = (S)-lactaldehyde + dihydroxyacetone phosphate. Its pathway is carbohydrate degradation; L-rhamnose degradation; glycerone phosphate from L-rhamnose: step 3/3. Catalyzes the reversible cleavage of L-rhamnulose-1-phosphate to dihydroxyacetone phosphate (DHAP) and L-lactaldehyde. The chain is Rhamnulose-1-phosphate aldolase from Salmonella paratyphi C (strain RKS4594).